A 181-amino-acid chain; its full sequence is Oligoribonuclease (181 aa).

In terms of domain architecture, Exonuclease spans 8 to 171 (LIWIDLEMTG…QDIQESIAEL (164 aa)). The active site involves tyrosine 129.

It belongs to the oligoribonuclease family.

It localises to the cytoplasm. Functionally, 3'-to-5' exoribonuclease specific for small oligoribonucleotides. This Shewanella sp. (strain MR-4) protein is Oligoribonuclease.